We begin with the raw amino-acid sequence, 474 residues long: Transcription factor SOX-4 (474 aa).

Residues M1–N10 are compositionally biased toward polar residues. Positions M1 to H58 are disordered. Over residues A31–G44 the composition is skewed to low complexity. The HMG box DNA-binding region spans I59 to K127. An N6-acetyllysine modification is found at K95. Disordered regions lie at residues Y128–K228, A262–K286, and L302–S416. Over residues N138–S149 the composition is skewed to low complexity. The span at V158–A189 shows a compositional bias: gly residues. Composition is skewed to low complexity over residues S266–A283, T304–D320, A336–S354, and A366–S396. Residues S397–L406 show a composition bias toward acidic residues. Residues D407–S416 are compositionally biased toward low complexity. Positions S426–F434 match the 9aaTAD motif.

In terms of assembly, interacts with UBE2I. Interacts with HDAC1; interaction inhibits the transcriptional activator activity. Acetylation at Lys-95 by KAT5 promotes the transcription activator activity and is required during myoblast differentiation. Acetylation by KAT5 abolishes the interaction between SOX4 and HDAC1 and switches SOX4 into a transcriptional activator. Testis, brain, and heart.

The protein resides in the nucleus. In terms of biological role, transcriptional activator that binds with high affinity to the T-cell enhancer motif 5'-AACAAAG-3' motif. Required for IL17A-producing Vgamma2-positive gamma-delta T-cell maturation and development, via binding to regulator loci of RORC to modulate expression. Involved in skeletal myoblast differentiation by promoting gene expression of CALD1. The protein is Transcription factor SOX-4 of Homo sapiens (Human).